A 188-amino-acid polypeptide reads, in one-letter code: Proline-rich protein 3 (188 aa).

Positions 1–157 (MPKRKKQNHH…DPQVMEDKSD (157 aa)) are disordered. Pro residues-rich tracts occupy residues 35 to 46 (IGPPSLLGPPPM) and 69 to 82 (LIPP…PPWG). The segment covering 83–96 (RGPIRRGLGPRSSP) has biased composition (low complexity). Positions 145–157 (PKDDPQVMEDKSD) are enriched in basic and acidic residues. The segment at 155-183 (KSDRPVCRHFAKKGHCRYEDLCAFYHPGV) adopts a C3H1-type zinc-finger fold.

This chain is Proline-rich protein 3 (PRR3), found in Homo sapiens (Human).